The sequence spans 277 residues: Inositol monophosphatase 1 (277 aa).

E70, D90, I92, and D93 together coordinate Mg(2+). E70 lines the substrate pocket. 92–95 serves as a coordination point for substrate; the sequence is IDGT. A Phosphothreonine modification is found at T168. Substrate contacts are provided by residues 194-196, E213, and D220; that span reads GTA. Position 220 (D220) interacts with Mg(2+).

This sequence belongs to the inositol monophosphatase superfamily. In terms of assembly, homodimer. It depends on Mg(2+) as a cofactor. In terms of processing, the N-terminus is blocked.

The protein localises to the cytoplasm. The enzyme catalyses a myo-inositol phosphate + H2O = myo-inositol + phosphate. It carries out the reaction 1D-myo-inositol 1-phosphate + H2O = myo-inositol + phosphate. It catalyses the reaction 1D-myo-inositol 2-phosphate + H2O = myo-inositol + phosphate. The catalysed reaction is 1D-myo-inositol 3-phosphate + H2O = myo-inositol + phosphate. The enzyme catalyses 1D-myo-inositol 4-phosphate + H2O = myo-inositol + phosphate. It carries out the reaction 1D-myo-inositol 5-phosphate + H2O = myo-inositol + phosphate. It catalyses the reaction 1D-myo-inositol 6-phosphate + H2O = myo-inositol + phosphate. The catalysed reaction is scyllo-inositol 1-phosphate + H2O = scyllo-inositol + phosphate. The enzyme catalyses alpha-D-galactose 1-phosphate + H2O = D-galactose + phosphate. It carries out the reaction alpha-D-glucose 1-phosphate + H2O = D-glucose + phosphate. It catalyses the reaction D-glucose 6-phosphate + H2O = D-glucose + phosphate. The catalysed reaction is beta-D-fructose 1-phosphate + H2O = D-fructose + phosphate. The enzyme catalyses glycerol 2-phosphate + H2O = glycerol + phosphate. It carries out the reaction adenosine 2'-phosphate + H2O = adenosine + phosphate. It functions in the pathway polyol metabolism; myo-inositol biosynthesis; myo-inositol from D-glucose 6-phosphate: step 2/2. Activity with myo-inositol monophosphate and D-galactose 1-phosphate is inhibited by Li(+), Ca(2+) and Mn(2+), but also by Mg(2+) at concentrations above 3 mM. In terms of biological role, phosphatase involved in the dephosphorylation of myo-inositol monophosphate to generate myo-inositol. Is also able to dephosphorylate scyllo-inositol-phosphate, myo-inositol 1,4-diphosphate, scyllo-inositol-1,3-diphosphate and scyllo-inositol-1,4-diphosphate. Also dephosphorylates in vitro other sugar-phosphates including D-galactose-1-phosphate, glucose-1-phosphate, glucose-6-phosphate, fructose-1-phosphate, beta-glycerophosphate and 2'-AMP. Responsible for the provision of inositol required for synthesis of phosphatidylinositol and polyphosphoinositides, and involved in maintaining normal brain function. Has been implicated as the pharmacological target for lithium Li(+) action in brain. Is equally active with myo-inositol monophosphate and D-galactose 1-phosphate. The sequence is that of Inositol monophosphatase 1 (IMPA1) from Bos taurus (Bovine).